Reading from the N-terminus, the 650-residue chain is Tudor domain-containing protein 3 (650 aa).

The tract at residues 147-169 (TKTFGGGGNAGSNLNPGAGGSRN) is disordered. In terms of domain architecture, UBA spans 192–232 (LVDEKALRHITEMGFCKDAARQALMDHSNNVEAALNFLLTG). Disordered stretches follow at residues 233 to 271 (SKPK…APST), 286 to 406 (EDNK…SCNN), and 427 to 447 (HQNS…DQRY). Basic and acidic residues-rich tracts occupy residues 320–337 (TRND…RFQK) and 366–388 (HWME…KDFS). Residues 390–406 (PPSNHQNEGSYRKSCNN) show a composition bias toward polar residues. A Tudor domain is found at 554-614 (SWRSGDECLA…RPIQAEAWEE (61 aa)). Residues 616–650 (GEFGDSLDFRRGGDGQPRRSTRPTQQFYQPPRARN) are disordered. Residues 622–632 (LDFRRGGDGQP) are compositionally biased toward basic and acidic residues.

Component of mRNA stress granules.

Its subcellular location is the cytoplasm. It is found in the nucleus. Scaffolding protein that specifically recognizes and binds dimethylarginine-containing proteins. Plays a role in the regulation of translation of target mRNAs by binding Arg/Gly-rich motifs (GAR) in dimethylarginine-containing proteins. In nucleus, acts as a coactivator: recognizes and binds asymmetric dimethylation on the core histone tails associated with transcriptional activation (H3R17me2a and H4R3me2a) and recruits proteins at these arginine-methylated loci. In cytoplasm, acts as an antiviral factor that participates in the assembly of stress granules together with G3BP1. The chain is Tudor domain-containing protein 3 (tdrd3) from Xenopus laevis (African clawed frog).